A 155-amino-acid chain; its full sequence is MVKAQGNVVAQNKKARHDYEILETYEAGIVLTGTEIKSVRAARITLKDGFAQVKNGEVWLNNVHITPYEQGNIWNQDPDRTRKLLLKKREIAKLDNELKGTGMTLVPLKVYLKNGFAKVLIGLAKGKHDYDKRESIKRREQDRDIKRQMKQFNGR.

Residues 132–147 are compositionally biased toward basic and acidic residues; it reads KRESIKRREQDRDIKR. A disordered region spans residues 132–155; that stretch reads KRESIKRREQDRDIKRQMKQFNGR.

This sequence belongs to the SmpB family.

It localises to the cytoplasm. Required for rescue of stalled ribosomes mediated by trans-translation. Binds to transfer-messenger RNA (tmRNA), required for stable association of tmRNA with ribosomes. tmRNA and SmpB together mimic tRNA shape, replacing the anticodon stem-loop with SmpB. tmRNA is encoded by the ssrA gene; the 2 termini fold to resemble tRNA(Ala) and it encodes a 'tag peptide', a short internal open reading frame. During trans-translation Ala-aminoacylated tmRNA acts like a tRNA, entering the A-site of stalled ribosomes, displacing the stalled mRNA. The ribosome then switches to translate the ORF on the tmRNA; the nascent peptide is terminated with the 'tag peptide' encoded by the tmRNA and targeted for degradation. The ribosome is freed to recommence translation, which seems to be the essential function of trans-translation. The chain is SsrA-binding protein from Streptococcus mutans serotype c (strain ATCC 700610 / UA159).